The chain runs to 360 residues: Photosystem II protein D1 (360 aa).

A run of 3 helical transmembrane segments spans residues 32-49, 121-136, and 145-159; these read YLGW…SATF, HFFI…EWEL, and WIFV…AASA. H121 contributes to the chlorophyll a binding site. Y129 is a binding site for pheophytin a. D173 and E192 together coordinate [CaMn4O5] cluster. A helical transmembrane segment spans residues 200–221; the sequence is LHMFGVAAVFGGSLFSAMHGSL. Residue H201 coordinates chlorophyll a. A quinone is bound by residues H218 and 267 to 268; that span reads SF. A Fe cation-binding site is contributed by H218. H275 is a Fe cation binding site. The helical transmembrane segment at 277-291 threads the bilayer; that stretch reads FLGAWPVVGIWLTAM. [CaMn4O5] cluster is bound by residues H335, E336, D345, and A347. Residues 348-360 constitute a propeptide that is removed on maturation; it reads CANCLLSLWPMVG.

It belongs to the reaction center PufL/M/PsbA/D family. In terms of assembly, PSII is composed of 1 copy each of membrane proteins PsbA, PsbB, PsbC, PsbD, PsbE, PsbF, PsbH, PsbI, PsbJ, PsbK, PsbL, PsbM, PsbT, PsbX, PsbY, PsbZ, Psb30/Ycf12, at least 3 peripheral proteins of the oxygen-evolving complex and a large number of cofactors. It forms dimeric complexes. The cofactor is The D1/D2 heterodimer binds P680, chlorophylls that are the primary electron donor of PSII, and subsequent electron acceptors. It shares a non-heme iron and each subunit binds pheophytin, quinone, additional chlorophylls, carotenoids and lipids. D1 provides most of the ligands for the Mn4-Ca-O5 cluster of the oxygen-evolving complex (OEC). There is also a Cl(-1) ion associated with D1 and D2, which is required for oxygen evolution. The PSII complex binds additional chlorophylls, carotenoids and specific lipids.. Post-translationally, tyr-164 forms a radical intermediate that is referred to as redox-active TyrZ, YZ or Y-Z. C-terminally processed by CtpA; processing is essential to allow assembly of the oxygen-evolving complex and thus photosynthetic growth.

It is found in the plastid. The protein localises to the chloroplast thylakoid membrane. The enzyme catalyses 2 a plastoquinone + 4 hnu + 2 H2O = 2 a plastoquinol + O2. Its function is as follows. Photosystem II (PSII) is a light-driven water:plastoquinone oxidoreductase that uses light energy to abstract electrons from H(2)O, generating O(2) and a proton gradient subsequently used for ATP formation. It consists of a core antenna complex that captures photons, and an electron transfer chain that converts photonic excitation into a charge separation. The D1/D2 (PsbA/PsbD) reaction center heterodimer binds P680, the primary electron donor of PSII as well as several subsequent electron acceptors. The protein is Photosystem II protein D1 of Karenia mikimotoi (Red tide dinoflagellate).